The primary structure comprises 638 residues: Probable potassium transport system protein Kup (638 aa).

The next 12 helical transmembrane spans lie at 25-45 (LAIA…LYSL), 65-85 (VISL…LLFV), 114-134 (AGAL…DAVI), 152-172 (PHLS…LFWI), 184-204 (FGPI…YHIV), 226-246 (LLQA…AEAL), 262-282 (AYGL…ALLI), 291-311 (PFFL…STVA), 352-372 (IYVP…VIGF), 382-402 (YGIA…VVMV), 410-430 (LLVG…FGAN), and 434-454 (VAQG…LLMT).

It belongs to the HAK/KUP transporter (TC 2.A.72) family.

Its subcellular location is the cell inner membrane. It carries out the reaction K(+)(in) + H(+)(in) = K(+)(out) + H(+)(out). Transport of potassium into the cell. Likely operates as a K(+):H(+) symporter. The protein is Probable potassium transport system protein Kup of Burkholderia lata (strain ATCC 17760 / DSM 23089 / LMG 22485 / NCIMB 9086 / R18194 / 383).